A 354-amino-acid chain; its full sequence is NADH-quinone oxidoreductase subunit H (354 aa).

Transmembrane regions (helical) follow at residues 25 to 45 (LVRILVVAVVILLCVAYLILW), 91 to 111 (WLYLVAPVMTVVPAFAVWAVI), 126 to 146 (LLYAMAISSIGVYAVILAGWA), 170 to 190 (MGFALVLVLMTAGSLNLSEIV), 205 to 225 (FLSWNWLPLLPVFVIYFISGI), 253 to 273 (MAFALFFLAEYINMIVISALA), 290 to 310 (FIPGIFWLVLKIFALLSVFIW), and 330 to 350 (VFLPVCVFWVIVVGFWMMSPL).

The protein belongs to the complex I subunit 1 family. As to quaternary structure, NDH-1 is composed of 14 different subunits. Subunits NuoA, H, J, K, L, M, N constitute the membrane sector of the complex.

Its subcellular location is the cell inner membrane. It carries out the reaction a quinone + NADH + 5 H(+)(in) = a quinol + NAD(+) + 4 H(+)(out). Functionally, NDH-1 shuttles electrons from NADH, via FMN and iron-sulfur (Fe-S) centers, to quinones in the respiratory chain. The immediate electron acceptor for the enzyme in this species is believed to be ubiquinone. Couples the redox reaction to proton translocation (for every two electrons transferred, four hydrogen ions are translocated across the cytoplasmic membrane), and thus conserves the redox energy in a proton gradient. This subunit may bind ubiquinone. This is NADH-quinone oxidoreductase subunit H from Burkholderia mallei (strain ATCC 23344).